Here is a 208-residue protein sequence, read N- to C-terminus: Small ribosomal subunit protein uS4 (208 aa).

The region spanning 95–161 is the S4 RNA-binding domain; sequence MRLDALVLRA…VPLQVAAAGA (67 aa).

It belongs to the universal ribosomal protein uS4 family. As to quaternary structure, part of the 30S ribosomal subunit. Contacts protein S5. The interaction surface between S4 and S5 is involved in control of translational fidelity.

Functionally, one of the primary rRNA binding proteins, it binds directly to 16S rRNA where it nucleates assembly of the body of the 30S subunit. With S5 and S12 plays an important role in translational accuracy. This Pseudarthrobacter chlorophenolicus (strain ATCC 700700 / DSM 12829 / CIP 107037 / JCM 12360 / KCTC 9906 / NCIMB 13794 / A6) (Arthrobacter chlorophenolicus) protein is Small ribosomal subunit protein uS4.